A 277-amino-acid polypeptide reads, in one-letter code: Large ribosomal subunit protein uL2 (277 aa).

The interval 222 to 277 is disordered; the sequence is GVAMNPVDHPHGGGEGRTSGGRHPVTPWGKPTKGKKTRSNKATDKFIMRSRHQRKK.

Belongs to the universal ribosomal protein uL2 family. In terms of assembly, part of the 50S ribosomal subunit. Forms a bridge to the 30S subunit in the 70S ribosome.

One of the primary rRNA binding proteins. Required for association of the 30S and 50S subunits to form the 70S ribosome, for tRNA binding and peptide bond formation. It has been suggested to have peptidyltransferase activity; this is somewhat controversial. Makes several contacts with the 16S rRNA in the 70S ribosome. The chain is Large ribosomal subunit protein uL2 from Brucella abortus (strain S19).